Reading from the N-terminus, the 429-residue chain is S-adenosylmethionine synthase (429 aa).

Position 9 (glutamate 9) interacts with Mg(2+). Histidine 15 lines the ATP pocket. Glutamate 43 contributes to the K(+) binding site. 2 residues coordinate L-methionine: glutamate 56 and glutamine 99. Residues 167-169 (DGK), 235-238 (SGRF), aspartate 246, 252-253 (RK), alanine 269, lysine 273, and lysine 277 each bind ATP. Aspartate 246 lines the L-methionine pocket. Lysine 277 serves as a coordination point for L-methionine.

The protein belongs to the AdoMet synthase family. In terms of assembly, homotetramer. It depends on Mn(2+) as a cofactor. Mg(2+) serves as cofactor. Requires Co(2+) as cofactor. The cofactor is K(+).

The protein localises to the cytoplasm. It catalyses the reaction L-methionine + ATP + H2O = S-adenosyl-L-methionine + phosphate + diphosphate. Its pathway is amino-acid biosynthesis; S-adenosyl-L-methionine biosynthesis; S-adenosyl-L-methionine from L-methionine: step 1/1. In terms of biological role, catalyzes the formation of S-adenosylmethionine from methionine and ATP. The reaction comprises two steps that are both catalyzed by the same enzyme: formation of S-adenosylmethionine (AdoMet) and triphosphate, and subsequent hydrolysis of the triphosphate. In Carica papaya (Papaya), this protein is S-adenosylmethionine synthase (SAMS).